Here is a 95-residue protein sequence, read N- to C-terminus: Protein TusB (95 aa).

The protein belongs to the DsrH/TusB family. Heterohexamer, formed by a dimer of trimers. The hexameric TusBCD complex contains 2 copies each of TusB, TusC and TusD. The TusBCD complex interacts with TusE.

The protein resides in the cytoplasm. Functionally, part of a sulfur-relay system required for 2-thiolation of 5-methylaminomethyl-2-thiouridine (mnm(5)s(2)U) at tRNA wobble positions. The protein is Protein TusB of Escherichia fergusonii (strain ATCC 35469 / DSM 13698 / CCUG 18766 / IAM 14443 / JCM 21226 / LMG 7866 / NBRC 102419 / NCTC 12128 / CDC 0568-73).